A 302-amino-acid chain; its full sequence is Endochitinase 2 (302 aa).

The region spanning 1–42 (EQCGRQAGGALCPGGLCCSQFGWCGSTADYCTVPGCQSQCSG) is the Chitin-binding type-1 domain. 7 disulfides stabilise this stretch: Cys3-Cys18, Cys12-Cys24, Cys17-Cys31, Cys36-Cys40, Cys73-Cys136, Cys148-Cys156, and Cys255-Cys287. Glu117 serves as the catalytic Proton donor. Positions 296-302 (GVSVDSM) are cleaved as a propeptide — removed in mature form.

This sequence belongs to the glycosyl hydrolase 19 family. Chitinase class I subfamily.

The enzyme catalyses Random endo-hydrolysis of N-acetyl-beta-D-glucosaminide (1-&gt;4)-beta-linkages in chitin and chitodextrins.. Defense against chitin-containing fungal pathogens. The sequence is that of Endochitinase 2 from Gossypium hirsutum (Upland cotton).